Reading from the N-terminus, the 174-residue chain is NAD(P)H-quinone oxidoreductase subunit J (174 aa).

It belongs to the complex I 30 kDa subunit family. NDH-1 can be composed of about 15 different subunits; different subcomplexes with different compositions have been identified which probably have different functions.

The protein localises to the cellular thylakoid membrane. The catalysed reaction is a plastoquinone + NADH + (n+1) H(+)(in) = a plastoquinol + NAD(+) + n H(+)(out). It catalyses the reaction a plastoquinone + NADPH + (n+1) H(+)(in) = a plastoquinol + NADP(+) + n H(+)(out). Its function is as follows. NDH-1 shuttles electrons from an unknown electron donor, via FMN and iron-sulfur (Fe-S) centers, to quinones in the respiratory and/or the photosynthetic chain. The immediate electron acceptor for the enzyme in this species is believed to be plastoquinone. Couples the redox reaction to proton translocation, and thus conserves the redox energy in a proton gradient. Cyanobacterial NDH-1 also plays a role in inorganic carbon-concentration. The sequence is that of NAD(P)H-quinone oxidoreductase subunit J from Picosynechococcus sp. (strain ATCC 27264 / PCC 7002 / PR-6) (Agmenellum quadruplicatum).